The chain runs to 84 residues: Cell division topological specificity factor (84 aa).

Belongs to the MinE family.

In terms of biological role, prevents the cell division inhibition by proteins MinC and MinD at internal division sites while permitting inhibition at polar sites. This ensures cell division at the proper site by restricting the formation of a division septum at the midpoint of the long axis of the cell. This Burkholderia multivorans (strain ATCC 17616 / 249) protein is Cell division topological specificity factor.